We begin with the raw amino-acid sequence, 504 residues long: Probable ergothioneine transporter EgtUBC (504 aa).

The ABC transmembrane type-1 domain occupies 19–198 (MIEHIQISFI…LLAIIFDLIL (180 aa)). A run of 6 helical transmembrane segments spans residues 25-45 (ISFI…ILLT), 49-69 (TISE…SLAL), 70-90 (LGLM…ALVV), 145-165 (AMVL…GGLG), 178-198 (SLIL…DLIL), and 209-229 (LLMT…IPMF). Positions 231-504 (QKGDKITLAG…DYLKAKGLIK (274 aa)) are ergothioneine binding domain.

It in the N-terminal section; belongs to the binding-protein-dependent transport system permease family. In the C-terminal section; belongs to the OsmX family. As to quaternary structure, the complex is probably composed of at least an ATP-binding protein (EgtUA) and a transmembrane protein (EgtUBC).

The protein localises to the membrane. Part of an ABC transporter complex EgtU required for the uptake of ergothioneine (EGT), a natural low-molecular weight (LMW) thiol antioxidant. Responsible for the translocation of the substrate across the membrane. Also contains a C-terminal periplasmic solute-binding domain (SBD) which binds to EGT with sub-micromolar affinity. Probably does not bind L-hercynine. The protein is Probable ergothioneine transporter EgtUBC (egtUBC) of Staphylococcus aureus (strain USA300).